Reading from the N-terminus, the 1309-residue chain is Clustered mitochondria protein homolog (1309 aa).

The tract at residues 1-34 (MLLNGDCPESLKKEAAAAEPPRENGLDEAGPGDE) is disordered. Residues 9–25 (ESLKKEAAAAEPPRENG) show a composition bias toward basic and acidic residues. Phosphoserine is present on residues S279 and S281. The region spanning 335–577 (RAEDAYTSRL…RTFPPDLNFL (243 aa)) is the Clu domain. The segment covering 636-651 (LETPSSLENGGPSSLE) has biased composition (polar residues). Residues 636 to 674 (LETPSSLENGGPSSLESKSEDPPGQEAGSEEEGSSASGL) form a disordered region. S654, S664, and S723 each carry phosphoserine. TPR repeat units lie at residues 978 to 1011 (AFHF…FNNV), 1020 to 1053 (CACL…SERV), 1104 to 1137 (ALLD…STKY), and 1146 to 1179 (ALSH…YKTQ). Residues 1264 to 1278 (HQLQEASRNRDRAEE) show a composition bias toward basic and acidic residues. The segment at 1264-1309 (HQLQEASRNRDRAEEPMATEPAPAGAPGDLGSQPPAAKDPSPSVQG) is disordered. Residues 1279–1290 (PMATEPAPAGAP) are compositionally biased toward low complexity.

The protein belongs to the CLU family.

The protein resides in the cytoplasm. Its subcellular location is the cytoplasmic granule. Functionally, mRNA-binding protein involved in proper cytoplasmic distribution of mitochondria. Specifically binds mRNAs of nuclear-encoded mitochondrial proteins in the cytoplasm and regulates transport or translation of these transcripts close to mitochondria, playing a role in mitochondrial biogenesis. The protein is Clustered mitochondria protein homolog (CLUH) of Homo sapiens (Human).